The primary structure comprises 463 residues: Chromosomal replication initiator protein DnaA (463 aa).

Positions 1-84 (MNTNQIILTN…QLFQHYNNAI (84 aa)) are domain I, interacts with DnaA modulators. A domain II region spans residues 84 to 124 (IKTVEIITKELPASNQATLELPTKTFADIGSSELNSENIFS). The segment at 125–343 (TFDIRFTFDN…GALNKVIAHS (219 aa)) is domain III, AAA+ region. ATP is bound by residues glycine 171, glycine 173, lysine 174, and threonine 175. A domain IV, binds dsDNA region spans residues 344–463 (NFTAKEITLE…INLMMKILQN (120 aa)).

It belongs to the DnaA family. Oligomerizes as a right-handed, spiral filament on DNA at oriC.

The protein resides in the cytoplasm. Functionally, plays an essential role in the initiation and regulation of chromosomal replication. ATP-DnaA binds to the origin of replication (oriC) to initiate formation of the DNA replication initiation complex once per cell cycle. Binds the DnaA box (a 9 base pair repeat at the origin) and separates the double-stranded (ds)DNA. Forms a right-handed helical filament on oriC DNA; dsDNA binds to the exterior of the filament while single-stranded (ss)DNA is stabiized in the filament's interior. The ATP-DnaA-oriC complex binds and stabilizes one strand of the AT-rich DNA unwinding element (DUE), permitting loading of DNA polymerase. After initiation quickly degrades to an ADP-DnaA complex that is not apt for DNA replication. Binds acidic phospholipids. The sequence is that of Chromosomal replication initiator protein DnaA from Rickettsia bellii (strain RML369-C).